The chain runs to 262 residues: ATP synthase subunit a (262 aa).

A run of 5 helical transmembrane segments spans residues 26–46 (VHID…FVFS), 86–106 (VAPL…IDLI), 130–150 (DISA…FYTI), 204–226 (LIFI…GIPL), and 240–260 (LQAF…YNKA).

Belongs to the ATPase A chain family. In terms of assembly, F-type ATPases have 2 components, CF(1) - the catalytic core - and CF(0) - the membrane proton channel. CF(1) has five subunits: alpha(3), beta(3), gamma(1), delta(1), epsilon(1). CF(0) has three main subunits: a(1), b(2) and c(9-12). The alpha and beta chains form an alternating ring which encloses part of the gamma chain. CF(1) is attached to CF(0) by a central stalk formed by the gamma and epsilon chains, while a peripheral stalk is formed by the delta and b chains.

The protein localises to the cell inner membrane. Key component of the proton channel; it plays a direct role in the translocation of protons across the membrane. The chain is ATP synthase subunit a from Haemophilus influenzae (strain PittEE).